The following is a 529-amino-acid chain: MFFKNLFPFSIMGGICRKVVLSPTSLFIPTNGDTITADGQEVLFAYPNNCLFVKDLTKVVRNKTIIQEKKYDENHYIIYYDNKELFLPKQIWEPVKSAVNAFIEKGYLDGGILLYGAPGMGKSELAKLISKWLGIGMIQKRADDIMSKYLGESEQNMARLFKEEIPQNLPTIVFMDEVDWLGVRRRFGSTTADTASTTVGQILTVFLQLFQDEVIEKRLPVLFIATTNARLEDLDDAFKRRFPFKIYFTPPSQEMIEYFTDKYIKKTGKDTFVVHGKQLSKKQFVNFIVGTGISIAEFKTLLETQSFDSISSSSTYLRRVIPADIPEKVFDATRVKLNGYISFNCDDFNGRTKFHVASFPWISWAILGSYIMLQCKKPIFELLPTDNLSVEELVSGLKQYEPTFFLMFSSSRDDYRLAILASRLKRERGIDVVFFSEDNKLFPESVMLTPYYDISNISFVNEEEKKQLIDTVIHFYGVEAKPDELNILISSRIKGGNSTSDFLNSLQTYILAKSKITDTEKVKDVVKLY.

Residues 354–373 (FHVASFPWISWAILGSYIML) traverse the membrane as a helical segment.

The protein resides in the host membrane. This is an uncharacterized protein from Acidianus convivator (ATV).